The sequence spans 90 residues: DNA-directed RNA polymerase subunit omega (90 aa).

This sequence belongs to the RNA polymerase subunit omega family. As to quaternary structure, the RNAP catalytic core consists of 2 alpha, 1 beta, 1 beta' and 1 omega subunit. When a sigma factor is associated with the core the holoenzyme is formed, which can initiate transcription.

It carries out the reaction RNA(n) + a ribonucleoside 5'-triphosphate = RNA(n+1) + diphosphate. In terms of biological role, promotes RNA polymerase assembly. Latches the N- and C-terminal regions of the beta' subunit thereby facilitating its interaction with the beta and alpha subunits. The chain is DNA-directed RNA polymerase subunit omega (rpoZ) from Streptomyces coelicolor (strain ATCC BAA-471 / A3(2) / M145).